The sequence spans 266 residues: Undecaprenyl-diphosphatase (266 aa).

Helical transmembrane passes span 4–24 (WLIA…PVSS), 46–66 (VLIQ…RLWG), 82–102 (IGIL…HDFI), 105–125 (VLYE…FILL), 142–162 (YPLK…VPGV), 182–202 (AAEF…AYDL), 216–236 (LIGI…KTVL), and 244–264 (FAPF…LLYI).

It belongs to the UppP family.

The protein localises to the cell inner membrane. The enzyme catalyses di-trans,octa-cis-undecaprenyl diphosphate + H2O = di-trans,octa-cis-undecaprenyl phosphate + phosphate + H(+). In terms of biological role, catalyzes the dephosphorylation of undecaprenyl diphosphate (UPP). Confers resistance to bacitracin. The protein is Undecaprenyl-diphosphatase of Caulobacter vibrioides (strain ATCC 19089 / CIP 103742 / CB 15) (Caulobacter crescentus).